A 252-amino-acid chain; its full sequence is Adenosylcobinamide-GDP ribazoletransferase (252 aa).

5 helical membrane-spanning segments follow: residues 33–53 (FISP…VVLL), 105–125 (TGSG…IATL), 132–152 (LWFF…LLGL), 184–204 (FAIL…LLVF), and 215–235 (MSGD…LLVA).

The protein belongs to the CobS family. Requires Mg(2+) as cofactor.

The protein resides in the cell membrane. It catalyses the reaction alpha-ribazole + adenosylcob(III)inamide-GDP = adenosylcob(III)alamin + GMP + H(+). It carries out the reaction alpha-ribazole 5'-phosphate + adenosylcob(III)inamide-GDP = adenosylcob(III)alamin 5'-phosphate + GMP + H(+). Its pathway is cofactor biosynthesis; adenosylcobalamin biosynthesis; adenosylcobalamin from cob(II)yrinate a,c-diamide: step 7/7. Its function is as follows. Joins adenosylcobinamide-GDP and alpha-ribazole to generate adenosylcobalamin (Ado-cobalamin). Also synthesizes adenosylcobalamin 5'-phosphate from adenosylcobinamide-GDP and alpha-ribazole 5'-phosphate. The chain is Adenosylcobinamide-GDP ribazoletransferase from Sulfolobus acidocaldarius (strain ATCC 33909 / DSM 639 / JCM 8929 / NBRC 15157 / NCIMB 11770).